We begin with the raw amino-acid sequence, 103 residues long: Small ribosomal subunit protein uS10 (103 aa).

It belongs to the universal ribosomal protein uS10 family. As to quaternary structure, part of the 30S ribosomal subunit.

Involved in the binding of tRNA to the ribosomes. This is Small ribosomal subunit protein uS10 from Chlorobium luteolum (strain DSM 273 / BCRC 81028 / 2530) (Pelodictyon luteolum).